Consider the following 677-residue polypeptide: Methionine--tRNA ligase (677 aa).

Positions 15–25 (PYANGSIHLGH) match the 'HIGH' region motif. Cysteine 146, cysteine 149, cysteine 159, and cysteine 162 together coordinate Zn(2+). A 'KMSKS' region motif is present at residues 333–337 (KMSKS). Lysine 336 serves as a coordination point for ATP. Residues 575-677 (DFAKVDLRVA…DGAKPGQQVK (103 aa)) form the tRNA-binding domain.

Belongs to the class-I aminoacyl-tRNA synthetase family. MetG type 1 subfamily. As to quaternary structure, homodimer. Requires Zn(2+) as cofactor.

The protein resides in the cytoplasm. It catalyses the reaction tRNA(Met) + L-methionine + ATP = L-methionyl-tRNA(Met) + AMP + diphosphate. In terms of biological role, is required not only for elongation of protein synthesis but also for the initiation of all mRNA translation through initiator tRNA(fMet) aminoacylation. The protein is Methionine--tRNA ligase of Salmonella arizonae (strain ATCC BAA-731 / CDC346-86 / RSK2980).